A 447-amino-acid chain; its full sequence is N-succinylarginine dihydrolase (447 aa).

Residues 19 to 28 (AGLSFGNEAS), N110, and 137 to 138 (HR) each bind substrate. E174 is a catalytic residue. R212 serves as a coordination point for substrate. The active site involves H248. Positions 250 and 359 each coordinate substrate. Catalysis depends on C365, which acts as the Nucleophile.

The protein belongs to the succinylarginine dihydrolase family. In terms of assembly, homodimer.

The enzyme catalyses N(2)-succinyl-L-arginine + 2 H2O + 2 H(+) = N(2)-succinyl-L-ornithine + 2 NH4(+) + CO2. The protein operates within amino-acid degradation; L-arginine degradation via AST pathway; L-glutamate and succinate from L-arginine: step 2/5. Functionally, catalyzes the hydrolysis of N(2)-succinylarginine into N(2)-succinylornithine, ammonia and CO(2). The protein is N-succinylarginine dihydrolase of Salmonella gallinarum (strain 287/91 / NCTC 13346).